We begin with the raw amino-acid sequence, 469 residues long: Ufm1-specific protease 2 (469 aa).

Residue Met1 is modified to N-acetylmethionine. Active-site residues include Cys302, Asp426, and His428.

Belongs to the peptidase C78 family.

Its subcellular location is the endoplasmic reticulum. It localises to the cytoplasm. It is found in the nucleus. Its function is as follows. Thiol-dependent isopeptidase that specifically cleaves UFM1, a ubiquitin-like modifier protein, from conjugated proteins, such as CD274/PD-L1, CYB5R3, DDRGK1, MRE11, RPL26/uL24, TRIP4 and RPL26/uL24. While it is also able to mediate the processing of UFM1 precursors, a prerequisite for conjugation reactions, UFSP2 mainly acts as a protein deUFMylase that mediates deconjugation of UFM1 from target proteins. Mediates deUFMylation of RPL26/uL24, a critical step to release the UFM1 ribosome E3 ligase (UREL) complex during the recycling of 60S ribosome subunits from the endoplasmic reticulum. Catalyzes deUFMylation of TRIP4, regulating intracellular nuclear receptors transactivation and thereby regulate cell proliferation and differentiation. The protein is Ufm1-specific protease 2 of Pongo abelii (Sumatran orangutan).